The sequence spans 320 residues: Pyrroline-5-carboxylate reductase 2 (320 aa).

N-acetylserine is present on Ser2. NADP(+)-binding positions include 6–11 (IGAGQL) and Ser34. Residues Ala8, Gln10, Leu11, Ser34, Glu36, Asn56, Val70, Lys71, and Ala97 each contribute to the NADPH site. NADP(+) is bound by residues Asn56, 69-72 (AVKP), and 95-97 (CAA). Residue Glu164 participates in L-proline binding. Residue Asn230 coordinates NADPH. L-proline-binding residues include Ala237 and Thr238. The disordered stretch occupies residues 293–320 (ESPTVSTLAPPSSGKLLTRNPAQGSKRE). Ser304 carries the post-translational modification Phosphoserine.

This sequence belongs to the pyrroline-5-carboxylate reductase family. Homodecamer; composed of 5 homodimers. Interacts with LTO1.

It is found in the cytoplasm. The protein resides in the mitochondrion. It carries out the reaction L-proline + NADP(+) = (S)-1-pyrroline-5-carboxylate + NADPH + 2 H(+). The enzyme catalyses L-proline + NAD(+) = (S)-1-pyrroline-5-carboxylate + NADH + 2 H(+). It functions in the pathway amino-acid biosynthesis; L-proline biosynthesis; L-proline from L-glutamate 5-semialdehyde: step 1/1. Its function is as follows. Oxidoreductase that catalyzes the last step in proline biosynthesis, which corresponds to the reduction of pyrroline-5-carboxylate to L-proline using NAD(P)H. At physiologic concentrations, has higher specific activity in the presence of NADH. Involved in cellular response to oxidative stress. In some cell types, such as erythrocytes, its primary function may be the generation of NADP(+). The sequence is that of Pyrroline-5-carboxylate reductase 2 from Rattus norvegicus (Rat).